A 173-amino-acid chain; its full sequence is Lipoprotein signal peptidase (173 aa).

The next 3 membrane-spanning stretches (helical) occupy residues 12-32 (WLWL…WTIQ), 67-87 (WQRY…VYLL), and 102-122 (ALIL…GYVI). Active-site residues include aspartate 123 and aspartate 141. A helical transmembrane segment spans residues 137 to 157 (FNIADSAIFTGAVIMIFESFF).

It belongs to the peptidase A8 family.

It localises to the cell inner membrane. It carries out the reaction Release of signal peptides from bacterial membrane prolipoproteins. Hydrolyzes -Xaa-Yaa-Zaa-|-(S,diacylglyceryl)Cys-, in which Xaa is hydrophobic (preferably Leu), and Yaa (Ala or Ser) and Zaa (Gly or Ala) have small, neutral side chains.. Its pathway is protein modification; lipoprotein biosynthesis (signal peptide cleavage). Functionally, this protein specifically catalyzes the removal of signal peptides from prolipoproteins. This is Lipoprotein signal peptidase from Psychromonas ingrahamii (strain DSM 17664 / CCUG 51855 / 37).